The chain runs to 129 residues: HTH-type transcriptional regulator HmrR (129 aa).

The 68-residue stretch at 1–68 (MNIGEASERS…VEECRQLLAL (68 aa)) folds into the HTH merR-type domain. A DNA-binding region (H-T-H motif) is located at residues 4 to 23 (GEASERSGLPSKTIRYYEDI).

As to quaternary structure, homodimer.

It localises to the cytoplasm. Its function is as follows. Regulates the transcription of actP. It detects cytoplasmic copper stress and activates transcription in response to increasing copper concentrations. In the absence of copper, it negatively regulates the transcription of actP. The protein is HTH-type transcriptional regulator HmrR (hmrR) of Rhizobium leguminosarum bv. viciae.